Reading from the N-terminus, the 103-residue chain is UPF0473 protein SSA_2239 (103 aa).

This sequence belongs to the UPF0473 family.

This Streptococcus sanguinis (strain SK36) protein is UPF0473 protein SSA_2239.